The chain runs to 298 residues: Elongation factor Ts (298 aa).

Positions 79-82 are involved in Mg(2+) ion dislocation from EF-Tu; that stretch reads TDFV.

It belongs to the EF-Ts family.

It localises to the cytoplasm. Associates with the EF-Tu.GDP complex and induces the exchange of GDP to GTP. It remains bound to the aminoacyl-tRNA.EF-Tu.GTP complex up to the GTP hydrolysis stage on the ribosome. The chain is Elongation factor Ts from Cereibacter sphaeroides (strain ATCC 17025 / ATH 2.4.3) (Rhodobacter sphaeroides).